The following is a 415-amino-acid chain: Coenzyme F420 hydrogenase subunit alpha (415 aa).

Residues C68, C71, C391, and C394 each contribute to the Ni(2+) site.

Belongs to the [NiFe]/[NiFeSe] hydrogenase large subunit family. In terms of assembly, heterocomplex of the form (alpha(1)beta(1)gamma(1))(8). Requires Ni(2+) as cofactor. Iron-sulfur cluster serves as cofactor. The cofactor is FAD.

The catalysed reaction is oxidized coenzyme F420-(gamma-L-Glu)(n) + H2 + H(+) = reduced coenzyme F420-(gamma-L-Glu)(n). Reduces the physiological low-potential two-electron acceptor coenzyme F420, and the artificial one-electron acceptor methylviologen. In Methanocaldococcus jannaschii (strain ATCC 43067 / DSM 2661 / JAL-1 / JCM 10045 / NBRC 100440) (Methanococcus jannaschii), this protein is Coenzyme F420 hydrogenase subunit alpha (frhA).